The chain runs to 572 residues: Proline--tRNA ligase (572 aa).

Belongs to the class-II aminoacyl-tRNA synthetase family. ProS type 1 subfamily. Homodimer.

Its subcellular location is the cytoplasm. The catalysed reaction is tRNA(Pro) + L-proline + ATP = L-prolyl-tRNA(Pro) + AMP + diphosphate. Functionally, catalyzes the attachment of proline to tRNA(Pro) in a two-step reaction: proline is first activated by ATP to form Pro-AMP and then transferred to the acceptor end of tRNA(Pro). As ProRS can inadvertently accommodate and process non-cognate amino acids such as alanine and cysteine, to avoid such errors it has two additional distinct editing activities against alanine. One activity is designated as 'pretransfer' editing and involves the tRNA(Pro)-independent hydrolysis of activated Ala-AMP. The other activity is designated 'posttransfer' editing and involves deacylation of mischarged Ala-tRNA(Pro). The misacylated Cys-tRNA(Pro) is not edited by ProRS. The sequence is that of Proline--tRNA ligase from Dichelobacter nodosus (strain VCS1703A).